The primary structure comprises 350 residues: Biotin synthase (350 aa).

Positions 54-278 (REIQLSTLLS…TMPQSYVRLS (225 aa)) constitute a Radical SAM core domain. Residues C69, C73, and C76 each contribute to the [4Fe-4S] cluster site. [2Fe-2S] cluster contacts are provided by C113, C144, C204, and R276.

It belongs to the radical SAM superfamily. Biotin synthase family. As to quaternary structure, homodimer. The cofactor is [4Fe-4S] cluster. [2Fe-2S] cluster is required as a cofactor.

It catalyses the reaction (4R,5S)-dethiobiotin + (sulfur carrier)-SH + 2 reduced [2Fe-2S]-[ferredoxin] + 2 S-adenosyl-L-methionine = (sulfur carrier)-H + biotin + 2 5'-deoxyadenosine + 2 L-methionine + 2 oxidized [2Fe-2S]-[ferredoxin]. It functions in the pathway cofactor biosynthesis; biotin biosynthesis; biotin from 7,8-diaminononanoate: step 2/2. In terms of biological role, catalyzes the conversion of dethiobiotin (DTB) to biotin by the insertion of a sulfur atom into dethiobiotin via a radical-based mechanism. The polypeptide is Biotin synthase (Neisseria meningitidis serogroup A / serotype 4A (strain DSM 15465 / Z2491)).